The primary structure comprises 396 residues: Digeranylgeranylglycerophospholipid reductase (396 aa).

11 residues coordinate FAD: Gly-14, Glu-33, Cys-44, Gly-45, Gly-47, Arg-100, Ala-124, Glu-162, Asp-283, Gly-295, and Ile-296. Positions 338 and 374 each coordinate a 2,3-bis-O-(geranylgeranyl)-sn-glycerol 1-phospholipid.

This sequence belongs to the geranylgeranyl reductase family. DGGGPL reductase subfamily. It depends on FAD as a cofactor.

The enzyme catalyses 2,3-bis-O-(phytanyl)-sn-glycerol 1-phosphate + 8 NADP(+) = 2,3-bis-O-(geranylgeranyl)-sn-glycerol 1-phosphate + 8 NADPH + 8 H(+). It carries out the reaction 2,3-bis-O-(phytanyl)-sn-glycerol 1-phosphate + 8 NAD(+) = 2,3-bis-O-(geranylgeranyl)-sn-glycerol 1-phosphate + 8 NADH + 8 H(+). It catalyses the reaction a 2,3-bis-O-phytanyl-sn-glycerol 1-phospholipid + 8 A = a 2,3-bis-O-(geranylgeranyl)-sn-glycerol 1-phospholipid + 8 AH2. The catalysed reaction is CDP-2,3-bis-O-(geranylgeranyl)-sn-glycerol + 8 AH2 = CDP-2,3-bis-O-(phytanyl)-sn-glycerol + 8 A. The enzyme catalyses archaetidylserine + 8 AH2 = 2,3-bis-O-phytanyl-sn-glycero-3-phospho-L-serine + 8 A. The protein operates within membrane lipid metabolism; glycerophospholipid metabolism. In terms of biological role, is involved in the reduction of 2,3-digeranylgeranylglycerophospholipids (unsaturated archaeols) into 2,3-diphytanylglycerophospholipids (saturated archaeols) in the biosynthesis of archaeal membrane lipids. Catalyzes the formation of archaetidic acid (2,3-di-O-phytanyl-sn-glyceryl phosphate) from 2,3-di-O-geranylgeranylglyceryl phosphate (DGGGP) via the hydrogenation of each double bond of the isoprenoid chains. Is also probably able to reduce double bonds of geranyl groups in CDP-2,3-bis-O-(geranylgeranyl)-sn-glycerol and archaetidylserine, thus acting at various stages in the biosynthesis of archaeal membrane lipids. The sequence is that of Digeranylgeranylglycerophospholipid reductase from Thermoplasma volcanium (strain ATCC 51530 / DSM 4299 / JCM 9571 / NBRC 15438 / GSS1).